The sequence spans 218 residues: Elongation factor Ts (218 aa).

The interval 82–85 (TDFV) is involved in Mg(2+) ion dislocation from EF-Tu.

This sequence belongs to the EF-Ts family.

It localises to the cytoplasm. Its function is as follows. Associates with the EF-Tu.GDP complex and induces the exchange of GDP to GTP. It remains bound to the aminoacyl-tRNA.EF-Tu.GTP complex up to the GTP hydrolysis stage on the ribosome. In Prochlorococcus marinus (strain MIT 9215), this protein is Elongation factor Ts.